Reading from the N-terminus, the 63-residue chain is uncharacterized protein (63 aa).

A signal peptide spans 1 to 21; that stretch reads MNRALILTFVLFFALFAISSA.

This is an uncharacterized protein from Dictyostelium discoideum (Social amoeba).